The sequence spans 603 residues: Glutathione-regulated potassium-efflux system protein KefB (603 aa).

13 helical membrane passes run A5–A25, I29–F49, A55–L75, I87–Y107, S115–M135, V152–G172, W180–R202, F207–G227, L230–L250, G268–Y288, I291–F311, F326–S346, and P356–I376. The RCK N-terminal domain occupies E400–S521.

Belongs to the monovalent cation:proton antiporter 2 (CPA2) transporter (TC 2.A.37) family. KefB subfamily. Interacts with the regulatory subunit KefG.

It is found in the cell inner membrane. Functionally, pore-forming subunit of a potassium efflux system that confers protection against electrophiles. Catalyzes K(+)/H(+) antiport. The polypeptide is Glutathione-regulated potassium-efflux system protein KefB (Pectobacterium carotovorum subsp. carotovorum (strain PC1)).